We begin with the raw amino-acid sequence, 236 residues long: Endo-1,4-beta-xylanase 3 (236 aa).

Residues 1 to 45 form the signal peptide; that stretch reads MQILTWALAALAAIPAVTAAPVETVEASSMDELVERSPNVTLVAR. Residues N39 and N106 are each glycosylated (N-linked (GlcNAc...) asparagine). The region spanning 46–236 is the GH11 domain; the sequence is GTPSSTGTHN…SSGSASMTVR (191 aa). E131 functions as the Nucleophile in the catalytic mechanism. E223 serves as the catalytic Proton donor.

This sequence belongs to the glycosyl hydrolase 11 (cellulase G) family.

It is found in the secreted. It catalyses the reaction Endohydrolysis of (1-&gt;4)-beta-D-xylosidic linkages in xylans.. The protein operates within glycan degradation; xylan degradation. In terms of biological role, endo-1,4-beta-xylanase involved in the hydrolysis of xylan, a major structural heterogeneous polysaccharide found in plant biomass representing the second most abundant polysaccharide in the biosphere, after cellulose. The sequence is that of Endo-1,4-beta-xylanase 3 (XYL3) from Pyricularia grisea (Crabgrass-specific blast fungus).